Here is a 116-residue protein sequence, read N- to C-terminus: Ribosome-binding factor A (116 aa).

It belongs to the RbfA family. In terms of assembly, monomer. Binds 30S ribosomal subunits, but not 50S ribosomal subunits or 70S ribosomes.

The protein localises to the cytoplasm. One of several proteins that assist in the late maturation steps of the functional core of the 30S ribosomal subunit. Associates with free 30S ribosomal subunits (but not with 30S subunits that are part of 70S ribosomes or polysomes). Required for efficient processing of 16S rRNA. May interact with the 5'-terminal helix region of 16S rRNA. The sequence is that of Ribosome-binding factor A from Pediococcus pentosaceus (strain ATCC 25745 / CCUG 21536 / LMG 10740 / 183-1w).